A 139-amino-acid polypeptide reads, in one-letter code: Probable disulfide formation protein C 2 (139 aa).

A helical transmembrane segment spans residues 6–25; that stretch reads KYHIAIAWMIATSAMLISLF. Cys-35 and Cys-38 form a disulfide bridge. Transmembrane regions (helical) follow at residues 40-59 and 66-83; these read YQRM…MYRK and YAFP…YQIT. The cysteines at positions 95 and 101 are disulfide-linked. A helical transmembrane segment spans residues 110–133; that stretch reads GFISIPMLSFIGFLVIIILIYIES.

This sequence belongs to the DsbB family. BdbC subfamily.

The protein localises to the cell membrane. Functionally, required for disulfide bond formation in some proteins. The chain is Probable disulfide formation protein C 2 (bdbC2) from Bacillus cereus (strain ATCC 10987 / NRS 248).